Reading from the N-terminus, the 224-residue chain is V-type ATP synthase subunit D (224 aa).

The interval 190–224 (REAGYTQKKIKAKIEGKNKEAREAAAATSHGSAAD) is disordered. Residues 201-212 (AKIEGKNKEARE) show a composition bias toward basic and acidic residues. Positions 213–224 (AAAATSHGSAAD) are enriched in low complexity.

It belongs to the V-ATPase D subunit family.

Produces ATP from ADP in the presence of a proton gradient across the membrane. The protein is V-type ATP synthase subunit D (atpD) of Deinococcus radiodurans (strain ATCC 13939 / DSM 20539 / JCM 16871 / CCUG 27074 / LMG 4051 / NBRC 15346 / NCIMB 9279 / VKM B-1422 / R1).